Reading from the N-terminus, the 390-residue chain is GTPase Obg (390 aa).

One can recognise an Obg domain in the interval 1–159 (MKFVDEAAIL…RDILLELLLL (159 aa)). The OBG-type G domain maps to 160 to 333 (ADVGMLGLPN…LCWDVMKFIN (174 aa)). GTP contacts are provided by residues 166 to 173 (GLPNAGKS), 191 to 195 (FTTLV), 213 to 216 (DIPG), 283 to 286 (NKID), and 314 to 316 (SAV). Mg(2+)-binding residues include Ser-173 and Thr-193. Positions 366-384 (AEADDDWDDDWDEEDDEGV) are enriched in acidic residues. Residues 366 to 390 (AEADDDWDDDWDEEDDEGVEIIYQK) are disordered.

It belongs to the TRAFAC class OBG-HflX-like GTPase superfamily. OBG GTPase family. Monomer. It depends on Mg(2+) as a cofactor.

The protein localises to the cytoplasm. Its function is as follows. An essential GTPase which binds GTP, GDP and possibly (p)ppGpp with moderate affinity, with high nucleotide exchange rates and a fairly low GTP hydrolysis rate. Plays a role in control of the cell cycle, stress response, ribosome biogenesis and in those bacteria that undergo differentiation, in morphogenesis control. The sequence is that of GTPase Obg from Serratia proteamaculans (strain 568).